The following is a 365-amino-acid chain: NADH-quinone oxidoreductase subunit 8 (365 aa).

9 helical membrane passes run 11–31 (WMVALKALLVVVGLLTAFAFM), 80–100 (FLFVLAPLISVVFALLAFGLI), 120–140 (LGILYLFAVSELAVYGIFLSG), 157–177 (ASLISYELGLGLALLAPVLLV), 192–212 (HGWLFLYAFPAFLVYLIASMA), 252–272 (FITASALIPTLFLGGWTMPVL), 273–293 (EVPYLWMFLKIAFFLFFFIWI), 310–330 (WGFLFPLALLWFLVTALVVAL), and 336–356 (YLLYLSALSFLVLLGAVLYTP).

The protein belongs to the complex I subunit 1 family. As to quaternary structure, NDH-1 is composed of 15 different subunits, Nqo1 to Nqo15. The complex has a L-shaped structure, with the hydrophobic arm (subunits Nqo7, Nqo8 and Nqo10 to Nqo14) embedded in the membrane and the hydrophilic peripheral arm (subunits Nqo1 to Nqo6, Nqo9 and Nqo15) protruding into the bacterial cytoplasm. The hydrophilic domain contains all the redox centers.

The protein localises to the cell inner membrane. The enzyme catalyses a quinone + NADH + 5 H(+)(in) = a quinol + NAD(+) + 4 H(+)(out). Its function is as follows. NDH-1 shuttles electrons from NADH, via FMN and iron-sulfur (Fe-S) centers, to quinones in the respiratory chain. The immediate electron acceptor for the enzyme in this species is menaquinone. Couples the redox reaction to proton translocation (for every two electrons transferred, four hydrogen ions are translocated across the cytoplasmic membrane), and thus conserves the redox energy in a proton gradient required for the synthesis of ATP. The sequence is that of NADH-quinone oxidoreductase subunit 8 (nqo8) from Thermus thermophilus (strain ATCC 27634 / DSM 579 / HB8).